We begin with the raw amino-acid sequence, 113 residues long: ATP-dependent Clp protease adapter protein ClpS (113 aa).

A compositionally biased stretch (basic and acidic residues) spans 1 to 11 (MHRDLHMMSDR). The disordered stretch occupies residues 1 to 25 (MHRDLHMMSDRSEDDGDTSILTATK).

It belongs to the ClpS family. Binds to the N-terminal domain of the chaperone ClpA.

Involved in the modulation of the specificity of the ClpAP-mediated ATP-dependent protein degradation. This chain is ATP-dependent Clp protease adapter protein ClpS, found in Roseobacter denitrificans (strain ATCC 33942 / OCh 114) (Erythrobacter sp. (strain OCh 114)).